Here is a 468-residue protein sequence, read N- to C-terminus: Glutamate--tRNA ligase (468 aa).

The 'HIGH' region motif lies at 14-24 (PSPTGFIHLGN). A 'KMSKS' region motif is present at residues 246-250 (KMSKR). Lys249 is an ATP binding site.

The protein belongs to the class-I aminoacyl-tRNA synthetase family. Glutamate--tRNA ligase type 1 subfamily. In terms of assembly, monomer.

Its subcellular location is the cytoplasm. It carries out the reaction tRNA(Glu) + L-glutamate + ATP = L-glutamyl-tRNA(Glu) + AMP + diphosphate. Catalyzes the attachment of glutamate to tRNA(Glu) in a two-step reaction: glutamate is first activated by ATP to form Glu-AMP and then transferred to the acceptor end of tRNA(Glu). The protein is Glutamate--tRNA ligase of Leptothrix cholodnii (strain ATCC 51168 / LMG 8142 / SP-6) (Leptothrix discophora (strain SP-6)).